Reading from the N-terminus, the 261-residue chain is Imidazole glycerol phosphate synthase subunit HisF (261 aa).

Active-site residues include Asp-12 and Asp-131.

This sequence belongs to the HisA/HisF family. Heterodimer of HisH and HisF.

It is found in the cytoplasm. It catalyses the reaction 5-[(5-phospho-1-deoxy-D-ribulos-1-ylimino)methylamino]-1-(5-phospho-beta-D-ribosyl)imidazole-4-carboxamide + L-glutamine = D-erythro-1-(imidazol-4-yl)glycerol 3-phosphate + 5-amino-1-(5-phospho-beta-D-ribosyl)imidazole-4-carboxamide + L-glutamate + H(+). It participates in amino-acid biosynthesis; L-histidine biosynthesis; L-histidine from 5-phospho-alpha-D-ribose 1-diphosphate: step 5/9. IGPS catalyzes the conversion of PRFAR and glutamine to IGP, AICAR and glutamate. The HisF subunit catalyzes the cyclization activity that produces IGP and AICAR from PRFAR using the ammonia provided by the HisH subunit. The chain is Imidazole glycerol phosphate synthase subunit HisF from Brucella anthropi (strain ATCC 49188 / DSM 6882 / CCUG 24695 / JCM 21032 / LMG 3331 / NBRC 15819 / NCTC 12168 / Alc 37) (Ochrobactrum anthropi).